We begin with the raw amino-acid sequence, 223 residues long: Phosphoribosylformylglycinamidine synthase subunit PurQ (223 aa).

Residues serine 3 to alanine 223 enclose the Glutamine amidotransferase type-1 domain. Cysteine 86 (nucleophile) is an active-site residue. Active-site residues include histidine 196 and glutamate 198.

Part of the FGAM synthase complex composed of 1 PurL, 1 PurQ and 2 PurS subunits.

It localises to the cytoplasm. It carries out the reaction N(2)-formyl-N(1)-(5-phospho-beta-D-ribosyl)glycinamide + L-glutamine + ATP + H2O = 2-formamido-N(1)-(5-O-phospho-beta-D-ribosyl)acetamidine + L-glutamate + ADP + phosphate + H(+). The catalysed reaction is L-glutamine + H2O = L-glutamate + NH4(+). Its pathway is purine metabolism; IMP biosynthesis via de novo pathway; 5-amino-1-(5-phospho-D-ribosyl)imidazole from N(2)-formyl-N(1)-(5-phospho-D-ribosyl)glycinamide: step 1/2. In terms of biological role, part of the phosphoribosylformylglycinamidine synthase complex involved in the purines biosynthetic pathway. Catalyzes the ATP-dependent conversion of formylglycinamide ribonucleotide (FGAR) and glutamine to yield formylglycinamidine ribonucleotide (FGAM) and glutamate. The FGAM synthase complex is composed of three subunits. PurQ produces an ammonia molecule by converting glutamine to glutamate. PurL transfers the ammonia molecule to FGAR to form FGAM in an ATP-dependent manner. PurS interacts with PurQ and PurL and is thought to assist in the transfer of the ammonia molecule from PurQ to PurL. This chain is Phosphoribosylformylglycinamidine synthase subunit PurQ, found in Rhizobium meliloti (strain 1021) (Ensifer meliloti).